A 665-amino-acid polypeptide reads, in one-letter code: Zinc finger CCCH domain-containing protein 45 (665 aa).

The tract at residues 1 to 55 (MDDGDLSFDFEGGLDQPPAGGGGGPAPHSSDPGGVGGGGGGGGPGDGGGHGRGRG) is disordered. The segment covering 33-50 (GGVGGGGGGGGPGDGGGH) has biased composition (gly residues). C3H1-type zinc fingers lie at residues 58-85 (SYRQ…HQFD), 86-113 (KARM…HSYD), and 114-139 (DVKE…HVKL). The disordered stretch occupies residues 167 to 256 (HNNYNQQGER…QATRIATPLP (90 aa)). A compositionally biased stretch (polar residues) spans 169–200 (NYNQQGERPQHPQGSGLPNQNSIDNTTTTTAQ). The segment covering 205 to 238 (QQAQTTNQQPPQQQQQQQQQQQQQQKPNTNDQVQ) has biased composition (low complexity). Polar residues predominate over residues 239–250 (SVPNGSSNQATR). A YTH domain is found at 260–395 (SRYFIVKSCN…FIGEQLASLL (136 aa)). Positions 432–459 (DIVLFDDNEEEEEEESEEEEEGNGQESQ) form a coiled coil. The segment covering 439-454 (NEEEEEEESEEEEEGN) has biased composition (acidic residues). Disordered regions lie at residues 439–469 (NEEE…GMMW) and 561–665 (GPLM…SRKR). Residues 561-573 (GPLMGGLGMGGPG) are compositionally biased toward gly residues. Over residues 596-623 (TKREQRRPGGERGDRYETTSDQGSRGHD) the composition is skewed to basic and acidic residues.

The sequence is that of Zinc finger CCCH domain-containing protein 45 from Oryza sativa subsp. japonica (Rice).